Reading from the N-terminus, the 283-residue chain is Lactoylglutathione lyase GLX1 (283 aa).

Residue A2 is modified to N-acetylalanine. 2 consecutive VOC domains span residues 17 to 141 and 147 to 275; these read RFLH…LIQR and PFCQ…LVDN. H20 provides a ligand contact to Zn(2+). R24 is a substrate binding site. E71 contributes to the Zn(2+) binding site. The substrate site is built by N75 and H89. Residues H89, E137, and Q150 each coordinate Zn(2+). E137 acts as the Proton donor/acceptor in catalysis. The substrate site is built by Q150 and R154. Q150 serves as a coordination point for a divalent metal cation. Position 201 (E201) interacts with Zn(2+). E201 is a binding site for a divalent metal cation. N205 contributes to the substrate binding site. Q219 is an a divalent metal cation binding site. 251-252 is a binding site for substrate; that stretch reads PL. V271 is a binding site for a divalent metal cation.

It belongs to the glyoxalase I family. In terms of assembly, homodimer. Zn(2+) is required as a cofactor. Phosphorylated by SnRK2.8.

The enzyme catalyses (R)-S-lactoylglutathione = methylglyoxal + glutathione. Its pathway is secondary metabolite metabolism; methylglyoxal degradation; (R)-lactate from methylglyoxal: step 1/2. Functionally, catalyzes the conversion of hemimercaptal, formed from methylglyoxal and glutathione, to S-lactoylglutathione. The protein is Lactoylglutathione lyase GLX1 of Arabidopsis thaliana (Mouse-ear cress).